The primary structure comprises 193 residues: Thymidine kinase (193 aa).

Residues 9–16 (ASMNAGKS) and 87–90 (DEAQ) each bind ATP. Catalysis depends on E88, which acts as the Proton acceptor. Residues C145, C147, C182, and H185 each coordinate Zn(2+).

Belongs to the thymidine kinase family. As to quaternary structure, homotetramer.

Its subcellular location is the cytoplasm. It catalyses the reaction thymidine + ATP = dTMP + ADP + H(+). This Zymomonas mobilis subsp. mobilis (strain ATCC 31821 / ZM4 / CP4) protein is Thymidine kinase.